Here is a 173-residue protein sequence, read N- to C-terminus: UPF0598 protein F59C6.12 (173 aa).

This sequence belongs to the UPF0598 family.

The sequence is that of UPF0598 protein F59C6.12 from Caenorhabditis elegans.